We begin with the raw amino-acid sequence, 298 residues long: Protease HtpX (298 aa).

The next 2 membrane-spanning stretches (helical) occupy residues 4-24 and 41-61; these read IALYLLTNLAVIVVASITLSL and TSLLIFSAVFGFAGSLISLLI. Histidine 147 provides a ligand contact to Zn(2+). Glutamate 148 is a catalytic residue. Histidine 151 serves as a coordination point for Zn(2+). Helical transmembrane passes span 162–182 and 193–213; these read LIQGVVNTFVIFAARVVGYVI and GLGFGYYIVVIVTEIIFGIAA. Glutamate 225 contributes to the Zn(2+) binding site.

Belongs to the peptidase M48B family. Zn(2+) serves as cofactor.

The protein resides in the cell inner membrane. The sequence is that of Protease HtpX from Alcanivorax borkumensis (strain ATCC 700651 / DSM 11573 / NCIMB 13689 / SK2).